Here is a 906-residue protein sequence, read N- to C-terminus: Protein kintoun (906 aa).

A Phosphoserine modification is found at Ser-376. Disordered stretches follow at residues 614–691 and 793–906; these read QQQK…RKQR and RKKN…DEDM. Residues 618 to 631 are compositionally biased toward basic residues; the sequence is KLNKKQRKRNKKQR. The segment covering 639–655 has biased composition (basic and acidic residues); the sequence is EELKAAQEELQLQHEKQ. Residues 793-808 show a composition bias toward basic residues; it reads RKKNQKRRDCKLRAQQ. Ser-812 is subject to Phosphoserine. The span at 837–850 shows a compositional bias: polar residues; that stretch reads ANAQYFKQPNNNNG. Basic and acidic residues-rich tracts occupy residues 851–865 and 875–887; these read HDQD…HDSG and NNEE…EADA. Acidic residues predominate over residues 894–906; the sequence is EMDDDDEDEDEDM.

It belongs to the PIH1 family. Kintoun subfamily. In terms of assembly, interacts with Pp1alpha-96A, Pp1-87B, Pp1-13C and flw.

The protein resides in the cytoplasm. Its function is as follows. Required for cytoplasmic pre-assembly of axonemal dyneins, thereby playing a central role in motility in cilia and flagella. Involved in pre-assembly of dynein arm complexes in the cytoplasm before intraflagellar transport loads them for the ciliary compartment. This chain is Protein kintoun, found in Drosophila virilis (Fruit fly).